We begin with the raw amino-acid sequence, 626 residues long: Chaperone protein HtpG (626 aa).

Residues 1 to 339 form an a; substrate-binding region; it reads MSQNQETRGF…SNDLPLNVSR (339 aa). A b region spans residues 340–555; sequence EILQDNKITA…NDQMTTQMAK (216 aa). Positions 556–626 are c; that stretch reads LFAAAGQPVP…FIKRINKLLG (71 aa).

This sequence belongs to the heat shock protein 90 family. In terms of assembly, homodimer.

Its subcellular location is the cytoplasm. Its function is as follows. Molecular chaperone. Has ATPase activity. This is Chaperone protein HtpG from Haemophilus influenzae (strain ATCC 51907 / DSM 11121 / KW20 / Rd).